A 315-amino-acid polypeptide reads, in one-letter code: Glutamyl-Q tRNA(Asp) synthetase (315 aa).

Residues 23 to 27 and Glu-59 contribute to the L-glutamate site; that span reads RFAPS. Residues 26-36 carry the 'HIGH' region motif; sequence PSPTGPLHIGS. Residues Cys-115, Cys-117, Tyr-142, and Cys-146 each contribute to the Zn(2+) site. The L-glutamate site is built by Tyr-202 and Arg-220. A 'KMSKS' region motif is present at residues 258–262; that stretch reads KLSKQ. Lys-261 provides a ligand contact to ATP.

Belongs to the class-I aminoacyl-tRNA synthetase family. GluQ subfamily. The cofactor is Zn(2+).

Functionally, catalyzes the tRNA-independent activation of glutamate in presence of ATP and the subsequent transfer of glutamate onto a tRNA(Asp). Glutamate is transferred on the 2-amino-5-(4,5-dihydroxy-2-cyclopenten-1-yl) moiety of the queuosine in the wobble position of the QUC anticodon. The protein is Glutamyl-Q tRNA(Asp) synthetase of Ralstonia nicotianae (strain ATCC BAA-1114 / GMI1000) (Ralstonia solanacearum).